A 185-amino-acid polypeptide reads, in one-letter code: NADH-quinone oxidoreductase subunit B (185 aa).

4 residues coordinate [4Fe-4S] cluster: cysteine 37, cysteine 38, cysteine 103, and cysteine 132.

Belongs to the complex I 20 kDa subunit family. NDH-1 is composed of 14 different subunits. Subunits NuoB, C, D, E, F, and G constitute the peripheral sector of the complex. Requires [4Fe-4S] cluster as cofactor.

It localises to the cell membrane. The enzyme catalyses a quinone + NADH + 5 H(+)(in) = a quinol + NAD(+) + 4 H(+)(out). Functionally, NDH-1 shuttles electrons from NADH, via FMN and iron-sulfur (Fe-S) centers, to quinones in the respiratory chain. The immediate electron acceptor for the enzyme in this species is believed to be a menaquinone. Couples the redox reaction to proton translocation (for every two electrons transferred, four hydrogen ions are translocated across the cytoplasmic membrane), and thus conserves the redox energy in a proton gradient. This Thermobifida fusca (strain YX) protein is NADH-quinone oxidoreductase subunit B.